Reading from the N-terminus, the 603-residue chain is Penicillin-binding protein activator LpoA (603 aa).

An N-terminal signal peptide occupies residues 1 to 26; sequence MAMNHHQRRSVPRLLTPIALSIVLSA. Cys-27 carries the N-palmitoyl cysteine lipid modification. A lipid anchor (S-diacylglycerol cysteine) is attached at Cys-27.

It belongs to the LpoA family. As to quaternary structure, interacts with PBP1a.

The protein resides in the cell outer membrane. Regulator of peptidoglycan synthesis that is essential for the function of penicillin-binding protein 1A (PBP1a). The chain is Penicillin-binding protein activator LpoA from Vibrio cholerae serotype O1 (strain ATCC 39541 / Classical Ogawa 395 / O395).